A 401-amino-acid chain; its full sequence is Exodeoxyribonuclease 7 large subunit (401 aa).

This sequence belongs to the XseA family. As to quaternary structure, heterooligomer composed of large and small subunits.

Its subcellular location is the cytoplasm. It carries out the reaction Exonucleolytic cleavage in either 5'- to 3'- or 3'- to 5'-direction to yield nucleoside 5'-phosphates.. Functionally, bidirectionally degrades single-stranded DNA into large acid-insoluble oligonucleotides, which are then degraded further into small acid-soluble oligonucleotides. The protein is Exodeoxyribonuclease 7 large subunit of Clostridium botulinum (strain Loch Maree / Type A3).